Consider the following 1251-residue polypeptide: ATP-dependent helicase/nuclease subunit A (1251 aa).

The UvrD-like helicase ATP-binding domain occupies 5–481 (TKWTDEQWEA…IILSRNFRSR (477 aa)). Position 26–33 (26–33 (AAAGAGKT)) interacts with ATP. The UvrD-like helicase C-terminal domain occupies 526–824 (TVGGEVEFHL…RIMSIHKSKG (299 aa)). The tract at residues 544–565 (NFTFENEGEEGRQADEGEEDEE) is disordered.

Belongs to the helicase family. AddA subfamily. In terms of assembly, heterodimer of AddA and AddB/RexB. It depends on Mg(2+) as a cofactor.

The enzyme catalyses Couples ATP hydrolysis with the unwinding of duplex DNA by translocating in the 3'-5' direction.. The catalysed reaction is ATP + H2O = ADP + phosphate + H(+). Functionally, the heterodimer acts as both an ATP-dependent DNA helicase and an ATP-dependent, dual-direction single-stranded exonuclease. Recognizes the chi site generating a DNA molecule suitable for the initiation of homologous recombination. The AddA nuclease domain is required for chi fragment generation; this subunit has the helicase and 3' -&gt; 5' nuclease activities. The polypeptide is ATP-dependent helicase/nuclease subunit A (Acetivibrio thermocellus (strain ATCC 27405 / DSM 1237 / JCM 9322 / NBRC 103400 / NCIMB 10682 / NRRL B-4536 / VPI 7372) (Clostridium thermocellum)).